The primary structure comprises 196 residues: Heat shock protein beta-8 (196 aa).

The tract at residues 1–34 (MADGQMPFPCHYTSRRRRDPFRDSPLSSRLLDDG) is disordered. Residues 23–34 (DSPLSSRLLDDG) show a composition bias toward low complexity. Serine 24 and serine 57 each carry phosphoserine. Threonine 63 is modified (phosphothreonine). Asymmetric dimethylarginine is present on residues arginine 71 and arginine 78. The 112-residue stretch at 74 to 185 (TAMTRFGVPA…PFGESSFNNE (112 aa)) folds into the sHSP domain. At serine 87 the chain carries Phosphoserine. The disordered stretch occupies residues 176-196 (PFGESSFNNELPQDGQEVTCT). Residues 178–196 (GESSFNNELPQDGQEVTCT) show a composition bias toward polar residues.

This sequence belongs to the small heat shock protein (HSP20) family. Monomer. Forms a ternary complex with BAG3 and HSPA1A. Component of the chaperone-assisted selective autophagy (CASA) complex consisting of BAG3, HSPA8/HSC70, HSPB8 and STUB1/CHIP. Interacts with HSPB1. Interacts with DNAJB6. Interacts with BAG3. In terms of processing, phosphorylated.

It is found in the cytoplasm. The protein resides in the nucleus. Involved in the chaperone-assisted selective autophagy (CASA), a crucial process for protein quality control, particularly in mechanical strained cells and tissues such as muscle. Displays temperature-dependent chaperone activity. The chain is Heat shock protein beta-8 (HSPB8) from Bos taurus (Bovine).